A 267-amino-acid polypeptide reads, in one-letter code: Hydroxynaphthalene reductase-like protein Arp2 (267 aa).

NADP(+) contacts are provided by Ile-25, Asn-45, Asp-71, and Asn-98. Catalysis depends on proton donor residues Ser-147 and Ser-148. Residues Tyr-162, Lys-166, Val-195, and Thr-197 each contribute to the NADP(+) site. Tyr-162 serves as the catalytic Proton acceptor. The Lowers pKa of active site Tyr role is filled by Lys-166.

It belongs to the short-chain dehydrogenases/reductases (SDR) family.

Hydroxynaphthalene reductase-like protein; part of the Pks2 gene cluster that mediates the formation of infectious structures (appressoria), enabling these fungi to kill insects faster. The product of the Pks2 gene cluster is different from the one of Pks1 and has still not been identified. This is Hydroxynaphthalene reductase-like protein Arp2 from Metarhizium anisopliae (strain ARSEF 549).